Reading from the N-terminus, the 241-residue chain is Phosphatidylcholine synthase (241 aa).

At 1-15 the chain is on the cytoplasmic side; the sequence is MKFFNYRRVPYAEIR. The chain crosses the membrane as a helical span at residues 16 to 36; the sequence is AFSVHILTASGSFLAFLGVVA. The Periplasmic portion of the chain corresponds to 37-41; it reads AAEHR. A helical membrane pass occupies residues 42 to 62; the sequence is FVDMFWWLGLALLVDGIDGPI. Topologically, residues 63-76 are cytoplasmic; it reads ARKVQVKEVLPNWS. Residues 77–97 form a helical membrane-spanning segment; that stretch reads GDTLDNVIDYVTYVLLPAFAL. Residues 98 to 100 lie on the Periplasmic side of the membrane; sequence YQS. The chain crosses the membrane as a helical span at residues 101–121; it reads GMIGEPWSFVAAGAIVVSSAI. Residues 122-133 lie on the Cytoplasmic side of the membrane; sequence YYADMGMKTDEY. The chain crosses the membrane as a helical span at residues 134 to 154; that stretch reads FFSGFPVVWNMVVFTLFVIQA. The Periplasmic portion of the chain corresponds to 155 to 156; it reads SE. The chain crosses the membrane as a helical span at residues 157 to 177; it reads VTASIVVFLSVILTFLPINFL. The Cytoplasmic segment spans residues 178-187; sequence HPVRVKRLRP. Residues 188–208 traverse the membrane as a helical segment; sequence LNLGIFLVWSVLGMYALLLHF. Over 209–211 the chain is Periplasmic; it reads ETP. A helical membrane pass occupies residues 212-232; sequence PWVVVGVVATGLYLYVIGFIL. The Cytoplasmic segment spans residues 233–241; the sequence is QIFPKLGRA.

It belongs to the CDP-alcohol phosphatidyltransferase class-I family. Mn(2+) is required as a cofactor.

Its subcellular location is the cell inner membrane. The catalysed reaction is a CDP-1,2-diacyl-sn-glycerol + choline = a 1,2-diacyl-sn-glycero-3-phosphocholine + CMP + H(+). With respect to regulation, activated by CDP-diacylglycerol especially in the presence of Triton X-100 (0.1% w/v) at concentrations where micelles are formed. Maximal activation by Triton X-100 at 0.2% w/v, but higher concentrations become inhibitory. Inhibited by EDTA and high concentrations of choline. Its function is as follows. Condenses choline with CDP-diglyceride to produce phosphatidylcholine and CMP. This is Phosphatidylcholine synthase (pcs) from Rhizobium meliloti (strain 1021) (Ensifer meliloti).